Consider the following 206-residue polypeptide: Uridine kinase (206 aa).

11–18 (GGTGSGKS) lines the ATP pocket.

Belongs to the uridine kinase family.

The protein resides in the cytoplasm. It carries out the reaction uridine + ATP = UMP + ADP + H(+). The catalysed reaction is cytidine + ATP = CMP + ADP + H(+). The protein operates within pyrimidine metabolism; CTP biosynthesis via salvage pathway; CTP from cytidine: step 1/3. It participates in pyrimidine metabolism; UMP biosynthesis via salvage pathway; UMP from uridine: step 1/1. In Clostridium botulinum (strain 657 / Type Ba4), this protein is Uridine kinase.